A 115-amino-acid polypeptide reads, in one-letter code: Parathyroid hormone (115 aa).

The N-terminal stretch at 1 to 25 (MIPAKDMAKVMIVMLAICFLTKSDG) is a signal peptide. Positions 26–31 (KSVKKR) are excised as a propeptide. Positions 51-69 (RVEWLRKKLQDVHNFVALG) are important for receptor binding. Positions 73 to 115 (APRDAGSQRPRKKEDNVLVESHEKSLGEADKADVNVLTKAKSQ) are disordered. Basic and acidic residues predominate over residues 84–105 (KKEDNVLVESHEKSLGEADKAD).

The protein belongs to the parathyroid hormone family. In terms of assembly, interacts with PTH1R (via N-terminal extracellular domain).

It localises to the secreted. Functionally, parathyroid hormone elevates calcium level by dissolving the salts in bone and preventing their renal excretion. Acts by binding to its receptor, PTH1R, activating G protein-coupled receptor signaling. Stimulates [1-14C]-2-deoxy-D-glucose (2DG) transport and glycogen synthesis in osteoblastic cells. The sequence is that of Parathyroid hormone from Homo sapiens (Human).